Consider the following 100-residue polypeptide: Large ribosomal subunit protein uL23 (100 aa).

It belongs to the universal ribosomal protein uL23 family. As to quaternary structure, part of the 50S ribosomal subunit. Contacts protein L29, and trigger factor when it is bound to the ribosome.

Functionally, one of the early assembly proteins it binds 23S rRNA. One of the proteins that surrounds the polypeptide exit tunnel on the outside of the ribosome. Forms the main docking site for trigger factor binding to the ribosome. This Shewanella sp. (strain MR-4) protein is Large ribosomal subunit protein uL23.